A 453-amino-acid polypeptide reads, in one-letter code: tRNA modification GTPase MnmE (453 aa).

R22, E79, and K119 together coordinate (6S)-5-formyl-5,6,7,8-tetrahydrofolate. Residues 215–376 (GMKVVIAGRP…LKQHLKSLMG (162 aa)) form the TrmE-type G domain. A K(+)-binding site is contributed by N225. Residues 225–230 (NAGKSS), 244–250 (TEIAGTT), 269–272 (DTAG), and 334–337 (NKAD) each bind GTP. S229 is a binding site for Mg(2+). Positions 244, 246, and 249 each coordinate K(+). T250 is a Mg(2+) binding site. K453 serves as a coordination point for (6S)-5-formyl-5,6,7,8-tetrahydrofolate.

This sequence belongs to the TRAFAC class TrmE-Era-EngA-EngB-Septin-like GTPase superfamily. TrmE GTPase family. In terms of assembly, homodimer. Heterotetramer of two MnmE and two MnmG subunits. K(+) is required as a cofactor.

It localises to the cytoplasm. Exhibits a very high intrinsic GTPase hydrolysis rate. Involved in the addition of a carboxymethylaminomethyl (cmnm) group at the wobble position (U34) of certain tRNAs, forming tRNA-cmnm(5)s(2)U34. The polypeptide is tRNA modification GTPase MnmE (Shewanella baltica (strain OS185)).